A 175-amino-acid polypeptide reads, in one-letter code: ATP-dependent protease subunit HslV (175 aa).

T2 is a catalytic residue. The Na(+) site is built by A156, C159, and T162.

Belongs to the peptidase T1B family. HslV subfamily. As to quaternary structure, a double ring-shaped homohexamer of HslV is capped on each side by a ring-shaped HslU homohexamer. The assembly of the HslU/HslV complex is dependent on binding of ATP.

Its subcellular location is the cytoplasm. It catalyses the reaction ATP-dependent cleavage of peptide bonds with broad specificity.. Its activity is regulated as follows. Allosterically activated by HslU binding. Functionally, protease subunit of a proteasome-like degradation complex believed to be a general protein degrading machinery. This Rhizobium rhizogenes (strain K84 / ATCC BAA-868) (Agrobacterium radiobacter) protein is ATP-dependent protease subunit HslV.